The primary structure comprises 150 residues: Large ribosomal subunit protein uL15 (150 aa).

Belongs to the universal ribosomal protein uL15 family. In terms of assembly, part of the 50S ribosomal subunit.

Its function is as follows. Binds to the 23S rRNA. The chain is Large ribosomal subunit protein uL15 from Rickettsia prowazekii (strain Madrid E).